Consider the following 84-residue polypeptide: Large ribosomal subunit protein bL31 (84 aa).

Disordered stretches follow at residues 1–41 (MQHD…DSTN) and 63–84 (RRYG…AADE). Positions 21-30 (EITTRSTMET) are enriched in polar residues. The segment covering 68–84 (TDDDEGDDEETEDAADE) has biased composition (acidic residues).

Belongs to the bacterial ribosomal protein bL31 family. Type A subfamily. Part of the 50S ribosomal subunit.

Binds the 23S rRNA. In Salinibacter ruber (strain DSM 13855 / M31), this protein is Large ribosomal subunit protein bL31.